The primary structure comprises 398 residues: Bone morphogenetic protein 2-B (398 aa).

The first 23 residues, 1–23 (MVAGIHSLLLLQFYQILLSGCTG), serve as a signal peptide directing secretion. The propeptide occupies 24–284 (LVPEEGKRKY…GHALHKRQKR (261 aa)). N-linked (GlcNAc...) asparagine glycans are attached at residues N137, N202, N237, and N340. Disulfide bonds link C298–C363, C327–C395, and C331–C397.

This sequence belongs to the TGF-beta family. In terms of assembly, homodimer; disulfide-linked.

Its subcellular location is the secreted. Induces cartilage and bone formation. This chain is Bone morphogenetic protein 2-B (bmp2-b), found in Xenopus laevis (African clawed frog).